A 141-amino-acid chain; its full sequence is Cell division protein SepF (141 aa).

It belongs to the SepF family. Homodimer. Interacts with FtsZ.

It localises to the cytoplasm. Functionally, cell division protein that is part of the divisome complex and is recruited early to the Z-ring. Probably stimulates Z-ring formation, perhaps through the cross-linking of FtsZ protofilaments. Its function overlaps with FtsA. The chain is Cell division protein SepF from Anoxybacillus flavithermus (strain DSM 21510 / WK1).